The sequence spans 466 residues: Probable sensor protein PcoS (466 aa).

The Cytoplasmic segment spans residues 1-10 (MRFKISLTTR). Residues 11–31 (LSLIFSAVMLTVWWLSSFILI) traverse the membrane as a helical segment. At 32–171 (STLNDYFDNQ…HTLLMDKLST (140 aa)) the chain is on the periplasmic side. Residues 172–192 (WLFWFNIGLVFISVFLGWLTT) traverse the membrane as a helical segment. The HAMP domain maps to 193 to 246 (RIGLKPLREMTSLASSMTVHSLDQRLNPDLAPPEISETMQEFNNMFDRLEGAFR). Residues 193-466 (RIGLKPLREM…IVFKVRLLMD (274 aa)) lie on the Cytoplasmic side of the membrane. One can recognise a Histidine kinase domain in the interval 254–466 (DIAHELRTPV…IVFKVRLLMD (213 aa)). H257 carries the post-translational modification Phosphohistidine; by autocatalysis.

It localises to the cell inner membrane. It carries out the reaction ATP + protein L-histidine = ADP + protein N-phospho-L-histidine.. Its function is as follows. Probable member of a two-component regulatory system PcoS/PcoR. May activate PcoR by phosphorylation. The polypeptide is Probable sensor protein PcoS (pcoS) (Escherichia coli).